We begin with the raw amino-acid sequence, 318 residues long: Aldehyde oxidoreductase FAD-binding subunit PaoB (318 aa).

The FAD-binding PCMH-type domain maps to 1–223; it reads MKAFTYERVN…VAVTLPPPLG (223 aa). FAD contacts are provided by residues 26–34 and T108; that span reads KFIAGGTNL. [4Fe-4S] cluster-binding residues include C119, C129, C138, and C157. The FAD site is built by D164, I213, and K230.

In terms of assembly, heterotrimer composed of PaoA, PaoB and PaoC. The cofactor is FAD. [4Fe-4S] cluster is required as a cofactor.

It is found in the periplasm. It carries out the reaction an aldehyde + A + H2O = a carboxylate + AH2 + H(+). The complex requires PaoD for activity. Oxidizes aldehydes to the corresponding carboxylic acids with a preference for aromatic aldehydes. It might play a role in the detoxification of aldehydes to avoid cell damage. The polypeptide is Aldehyde oxidoreductase FAD-binding subunit PaoB (Escherichia coli (strain K12)).